Reading from the N-terminus, the 566-residue chain is Zinc finger protein 704 (566 aa).

Disordered stretches follow at residues 1–148 (MQAR…ARGA), 166–203 (DFRRDSSKKPSHHLFPLAMEEDVRTADTKKTSRVLDQE), and 253–324 (PLVR…DEAD). Over residues 12–31 (LGSRRGGAAPAPAPEAAALG) the composition is skewed to low complexity. Residues 32-55 (LPPPGPSPAAAPGSWRPPLPPPRG) are compositionally biased toward pro residues. Positions 56 to 72 (TGPSRAAAASSPVLLLL) are enriched in low complexity. Basic and acidic residues predominate over residues 91-100 (RVTEKPRGVA). Acidic residues predominate over residues 101–128 (EEEDDDEEEDEEVVVEVVDGDEDDEDAE). Positions 186–203 (EDVRTADTKKTSRVLDQE) are enriched in basic and acidic residues. The segment covering 267–290 (SGSWKEGAPSSSSSSGYWSWSAPS) has biased composition (low complexity). The C2H2-type zinc-finger motif lies at 346–371 (FKCLWKSCGKVLNTAAGIQKHIRAVH). S378 and S381 each carry phosphoserine. Disordered stretches follow at residues 409-436 (VSPSQSLASAPAFPIPDSSRTETPCAKT) and 497-535 (PVSPPHHPTAGSGEQRQHAHTALSSPPRGTVTLRKPRGE). Residues 471–566 (GSAKFTPNGS…WKKACQRFID (96 aa)) form a sufficient for binding to RE2 sequence motifs region. The CR1 signature appears at 537-541 (KKCRK). Positions 555-559 (CRWKK) match the CR2 motif.

It localises to the nucleus. Transcription factor which binds to RE2 sequence elements in the MYOD1 enhancer. This Mus musculus (Mouse) protein is Zinc finger protein 704.